A 212-amino-acid chain; its full sequence is tRNA (guanine-N(7)-)-methyltransferase (212 aa).

S-adenosyl-L-methionine is bound by residues glutamate 44, aspartate 69, aspartate 96, and aspartate 118. The active site involves aspartate 118. Residue lysine 122 coordinates substrate. The interval 124-129 (RHEKRR) is interaction with RNA. Substrate-binding positions include aspartate 154 and 191–194 (TEYE).

It belongs to the class I-like SAM-binding methyltransferase superfamily. TrmB family.

It carries out the reaction guanosine(46) in tRNA + S-adenosyl-L-methionine = N(7)-methylguanosine(46) in tRNA + S-adenosyl-L-homocysteine. It functions in the pathway tRNA modification; N(7)-methylguanine-tRNA biosynthesis. Catalyzes the formation of N(7)-methylguanine at position 46 (m7G46) in tRNA. This Streptococcus suis (strain 05ZYH33) protein is tRNA (guanine-N(7)-)-methyltransferase.